The sequence spans 492 residues: FAD-linked oxidoreductase pgmH (492 aa).

Residues 54–224 (SIRLATLVVY…TEFKYRVHKQ (171 aa)) enclose the FAD-binding PCMH-type domain.

The protein belongs to the oxygen-dependent FAD-linked oxidoreductase family. It depends on FAD as a cofactor.

Its pathway is pigment biosynthesis. It functions in the pathway secondary metabolite biosynthesis. FAD-linked oxidoreductase; part of the gene cluster that mediates the biosynthesis of pleosporalin A, ascomycone A, as well as a third cryptic naphthoquinone derived pigment, all responsible for the coloration of conidia. Essential for the production of pleosporalin A, but not the 2 other final products. The pathway begins with the biosynthesis of the cyclized heptaketide 3-acetonyl-1,6,8-trihydroxy-2-naphthaldehyde by the NR-PKS pgmA. The C-6 hydroxyl group is further methylated by the O-methyltransferase pgmB to yield fusarubinaldehyde which is in turn oxidized by the cytochrome P450 monooxygenase pgmC at C-9. The C-1 hydroxyl group is then methylated spontaneously. Although pgmE, pgmD and pgmH are essential for the production of pleosporalin A, it is not the case for the 2 other final products and it remains difficult to assign a specific function to each enzyme. PgmF and pgmG seem not to be involved in pigment biosynthesis although they were regulated by the cluster-specific transcription factor pgmR. The protein is FAD-linked oxidoreductase pgmH of Aspergillus terreus.